A 162-amino-acid polypeptide reads, in one-letter code: METLPASWVLTLLCLGSHLLQAVISTTVIPSCIPGESEDNCTALVQMEDDPRVAQVQITKCSSDMDGYCLHGQCIYLVDMREKFCRCEVGYTGLRCEHFFLTVHQPLSKEYVALTVILIFLFLIITAGCIYYFCRWYKNRKSKKSREEYERVTSGDPVLPQV.

Positions 1–22 (METLPASWVLTLLCLGSHLLQA) are cleaved as a signal peptide. A propeptide spanning residues 23-55 (VISTTVIPSCIPGESEDNCTALVQMEDDPRVAQ) is cleaved from the precursor. Residue asparagine 40 is glycosylated (N-linked (GlcNAc...) asparagine). Over 53–112 (VAQVQITKCSSDMDGYCLHGQCIYLVDMREKFCRCEVGYTGLRCEHFFLTVHQPLSKEYV) the chain is Extracellular. An EGF-like domain is found at 57 to 97 (QITKCSSDMDGYCLHGQCIYLVDMREKFCRCEVGYTGLRCE). Disulfide bonds link cysteine 61–cysteine 74, cysteine 69–cysteine 85, and cysteine 87–cysteine 96. Positions 102–162 (TVHQPLSKEY…TSGDPVLPQV (61 aa)) are cleaved as a propeptide — removed in mature form. A helical membrane pass occupies residues 113-133 (ALTVILIFLFLIITAGCIYYF). Residues 134 to 162 (CRWYKNRKSKKSREEYERVTSGDPVLPQV) lie on the Cytoplasmic side of the membrane.

In terms of assembly, interacts with EGFR and ERBB4.

The protein localises to the secreted. It localises to the extracellular space. It is found in the cell membrane. Its function is as follows. Ligand of the EGF receptor/EGFR and ERBB4. Stimulates EGFR and ERBB4 tyrosine phosphorylation. Contributes to inflammation, wound healing, tissue repair, and oocyte maturation by regulating angiogenesis and vascular remodeling and by stimulating cell proliferation. The polypeptide is Proepiregulin (Ereg) (Mus musculus (Mouse)).